We begin with the raw amino-acid sequence, 433 residues long: tRNA(Ile)-lysidine synthase (433 aa).

37–42 (SGGKDS) is a binding site for ATP.

The protein belongs to the tRNA(Ile)-lysidine synthase family.

It localises to the cytoplasm. It carries out the reaction cytidine(34) in tRNA(Ile2) + L-lysine + ATP = lysidine(34) in tRNA(Ile2) + AMP + diphosphate + H(+). Ligates lysine onto the cytidine present at position 34 of the AUA codon-specific tRNA(Ile) that contains the anticodon CAU, in an ATP-dependent manner. Cytidine is converted to lysidine, thus changing the amino acid specificity of the tRNA from methionine to isoleucine. In Leptospira interrogans serogroup Icterohaemorrhagiae serovar Lai (strain 56601), this protein is tRNA(Ile)-lysidine synthase.